A 329-amino-acid polypeptide reads, in one-letter code: Putative oligopeptide transport ATP-binding protein YkfD (329 aa).

Residues 7 to 252 form the ABC transporter domain; that stretch reads LEVSQLKMHF…PLHPYTKALL (246 aa). 44-51 is a binding site for ATP; it reads GESGCGKS.

Belongs to the ABC transporter superfamily.

The polypeptide is Putative oligopeptide transport ATP-binding protein YkfD (ykfD) (Bacillus subtilis (strain 168)).